The chain runs to 446 residues: Zinc finger protein 19 (446 aa).

In terms of domain architecture, KRAB spans 2–73 (VTFEDVAVHF…EAQDDPPAET (72 aa)). 9 C2H2-type zinc fingers span residues 149 to 171 (FICE…QRIH), 177 to 199 (FECS…QRIH), 205 to 227 (YQCE…QRIH), 233 to 255 (YYCT…QRIH), 261 to 283 (YECN…QKIH), 289 to 311 (YECN…QRIH), 317 to 339 (YSCK…QRIH), 345 to 367 (FDCV…LRIH), and 373 to 395 (YVCD…QRIH). The C2H2-type 10; degenerate zinc-finger motif lies at 401 to 423 (YEYSKYEKAFGTSSQLGHLEHVH).

It belongs to the krueppel C2H2-type zinc-finger protein family.

The protein resides in the nucleus. In terms of biological role, may be involved in transcriptional regulation. This is Zinc finger protein 19 (ZNF19) from Pongo abelii (Sumatran orangutan).